The following is a 289-amino-acid chain: Complement C1q tumor necrosis factor-related protein 7 (289 aa).

Residues 1 to 16 (MIVLLYVTSLAICASG) form the signal peptide. The interval 36 to 134 (IPGLPGPPGP…GDRGDQGDPG (99 aa)) is disordered. Residues 38-139 (GLPGPPGPPG…QGDPGLPGVC (102 aa)) form the Collagen-like domain. Over residues 48 to 61 (ANGSPGPHGRIGLP) the composition is skewed to low complexity. The span at 63–76 (RDGRDGRKGEKGEK) shows a compositional bias: basic and acidic residues. Residues 78 to 91 (TAGLKGKTGPLGLA) show a composition bias toward low complexity. The span at 93-102 (EKGDQGETGK) shows a compositional bias: basic and acidic residues. The region spanning 143–279 (SIVLKSAFSV…GFLLYVDTDY (137 aa)) is the C1q domain.

Its subcellular location is the secreted. The chain is Complement C1q tumor necrosis factor-related protein 7 (C1qtnf7) from Mus musculus (Mouse).